The chain runs to 129 residues: Glycine cleavage system H protein (129 aa).

Residues 24 to 106 (TYTVGITEHA…YTDGWIFKIR (83 aa)) enclose the Lipoyl-binding domain. K65 bears the N6-lipoyllysine mark.

This sequence belongs to the GcvH family. The glycine cleavage system is composed of four proteins: P, T, L and H. The cofactor is (R)-lipoate.

In terms of biological role, the glycine cleavage system catalyzes the degradation of glycine. The H protein shuttles the methylamine group of glycine from the P protein to the T protein. This is Glycine cleavage system H protein from Enterobacter sp. (strain 638).